We begin with the raw amino-acid sequence, 422 residues long: Platelet-activating factor acetylhydrolase (422 aa).

The signal sequence occupies residues 1–21 (MASLWVRARRVFMKSRASGFS). Serine 266 (nucleophile) is an active-site residue. Aspartate 289 functions as the Charge relay system in the catalytic mechanism. N-linked (GlcNAc...) asparagine glycosylation is present at asparagine 331. The Charge relay system role is filled by histidine 345.

It belongs to the AB hydrolase superfamily. Lipase family. As to expression, plasma.

The protein localises to the secreted. It is found in the extracellular space. It carries out the reaction a 1-O-alkyl-2-acetyl-sn-glycero-3-phosphocholine + H2O = a 1-O-alkyl-sn-glycero-3-phosphocholine + acetate + H(+). Modulates the action of platelet-activating factor (PAF) by hydrolyzing the sn-2 ester bond to yield the biologically inactive lyso-PAF. Has a specificity for substrates with a short residue at the sn-2 position. It is inactive against long-chain phospholipids. The protein is Platelet-activating factor acetylhydrolase (PLA2G7) of Gallus gallus (Chicken).